The sequence spans 372 residues: Putative aminopeptidase SgcX (372 aa).

A divalent metal cation contacts are provided by His-67 and Asp-180. The Proton acceptor role is filled by Glu-212. Residues Glu-213, Asp-235, and His-329 each contribute to the a divalent metal cation site.

This sequence belongs to the peptidase M42 family. Requires a divalent metal cation as cofactor.

The protein is Putative aminopeptidase SgcX (sgcX) of Salmonella typhi.